A 201-amino-acid polypeptide reads, in one-letter code: Holliday junction branch migration complex subunit RuvA (201 aa).

Residues 1-63 (MIEYVRGELA…EDAYVLYGFA (63 aa)) are domain I. Positions 64-142 (DKQEREIFLL…TMGATVAGGS (79 aa)) are domain II. Residues 143–151 (ASAGMLLQS) form a flexible linker region. The tract at residues 152–201 (ASVEVQEEAVAALTMLGFAAAPSQKVVLAILKEEPDAPVEKVIKLALKRL) is domain III.

The protein belongs to the RuvA family. In terms of assembly, homotetramer. Forms an RuvA(8)-RuvB(12)-Holliday junction (HJ) complex. HJ DNA is sandwiched between 2 RuvA tetramers; dsDNA enters through RuvA and exits via RuvB. An RuvB hexamer assembles on each DNA strand where it exits the tetramer. Each RuvB hexamer is contacted by two RuvA subunits (via domain III) on 2 adjacent RuvB subunits; this complex drives branch migration. In the full resolvosome a probable DNA-RuvA(4)-RuvB(12)-RuvC(2) complex forms which resolves the HJ.

The protein resides in the cytoplasm. Its function is as follows. The RuvA-RuvB-RuvC complex processes Holliday junction (HJ) DNA during genetic recombination and DNA repair, while the RuvA-RuvB complex plays an important role in the rescue of blocked DNA replication forks via replication fork reversal (RFR). RuvA specifically binds to HJ cruciform DNA, conferring on it an open structure. The RuvB hexamer acts as an ATP-dependent pump, pulling dsDNA into and through the RuvAB complex. HJ branch migration allows RuvC to scan DNA until it finds its consensus sequence, where it cleaves and resolves the cruciform DNA. This Bacteroides thetaiotaomicron (strain ATCC 29148 / DSM 2079 / JCM 5827 / CCUG 10774 / NCTC 10582 / VPI-5482 / E50) protein is Holliday junction branch migration complex subunit RuvA.